A 172-amino-acid chain; its full sequence is MSKEKEVLLNEEIRADEIRCVGDDGKVYGIISSDEALEIANRLGLDLVMIAADAKPPVCKIMDYGKFRYQQEKKQKEAKKKQKVIDIKEIKLSVKIAQNDINYKVKHALEFLEQGKHVRFRVFLKGREMATPEAGVVLLEKIWTMIENEANRDKEPNFEGRYVNMLVTPKKA.

It belongs to the IF-3 family. As to quaternary structure, monomer.

The protein resides in the cytoplasm. In terms of biological role, IF-3 binds to the 30S ribosomal subunit and shifts the equilibrium between 70S ribosomes and their 50S and 30S subunits in favor of the free subunits, thus enhancing the availability of 30S subunits on which protein synthesis initiation begins. This is Translation initiation factor IF-3 from Campylobacter jejuni subsp. doylei (strain ATCC BAA-1458 / RM4099 / 269.97).